Consider the following 63-residue polypeptide: MFHLVDFQVTIAEILIIIMKTFRVAIWNLDILISSIVRQLFKPLTKKKYSELDDEEPMELDYP.

The protein belongs to the coronaviruses accessory protein 6 family.

It is found in the host endoplasmic reticulum membrane. It localises to the host Golgi apparatus membrane. In terms of biological role, could be a determinant of virus virulence. Seems to stimulate cellular DNA synthesis in vitro. The polypeptide is ORF6 protein (Rhinolophus macrotis (Big-eared horseshoe bat)).